The primary structure comprises 502 residues: Dipeptide and tripeptide permease A (502 aa).

Topologically, residues 1 to 35 (MSTANNKPTDESVSLNAFKQPKAFYLIFSIELWER) are cytoplasmic. Residues 36-56 (FGFYGLQGIMAVYLVKQLGMS) traverse the membrane as a helical segment. Over 57–60 (EADS) the chain is Periplasmic. Residues 61–81 (ITLFSSFSALVYGLVAVGGWL) traverse the membrane as a helical segment. Residues 82–90 (GDKVLGTKR) are Cytoplasmic-facing. Residues 91 to 111 (VIMLGAVVLAIGYGLVAWSGH) traverse the membrane as a helical segment. Residue D112 is a topological domain, periplasmic. Residues 113 to 133 (AAVVYMGMATIAVGNGLFKAN) form a helical membrane-spanning segment. The Cytoplasmic portion of the chain corresponds to 134 to 154 (PSSLLSTCYNKDDPRLDGAFT). A helical membrane pass occupies residues 155 to 175 (MYYMSINIGSFFSMLATPWLA). Residues 176 to 179 (AKFG) lie on the Periplasmic side of the membrane. Residues 180-200 (WSVAFALSFVGMLITVVNFLF) traverse the membrane as a helical segment. At 201 to 218 (CRSWVKNYGSKPDFEPVH) the chain is on the cytoplasmic side. Residues 219-239 (IGKLLATIVGVVILATIATWL) form a helical membrane-spanning segment. Topologically, residues 240-247 (LHNQGVAR) are periplasmic. The chain crosses the membrane as a helical span at residues 248-268 (AVLGVVALGIICIFAKEAFAM). Topologically, residues 269–275 (QGAARRK) are cytoplasmic. Residues 276–296 (MIVAFILMLQAVVFFVLYSQM) traverse the membrane as a helical segment. Over 297-321 (PTSLNFFAIRNVEHSILSIAFEPEQ) the chain is Periplasmic. The chain crosses the membrane as a helical span at residues 322–342 (FQALNPFWIMIGSPILAAIYN). Residues 343–353 (KMGDRLPMPHK) lie on the Cytoplasmic side of the membrane. The chain crosses the membrane as a helical span at residues 354–374 (FAIGMVLCSGAFLVLPLGTKF). Residues 375-384 (ATDAGIVSVN) are Periplasmic-facing. A helical transmembrane segment spans residues 385-405 (WLILSYALQSIGELMISGLGL). Residues 406–415 (AMVAQLVPQR) lie on the Cytoplasmic side of the membrane. A helical membrane pass occupies residues 416–436 (LMGFIMGSWFLTTAGAALIAG). At 437–460 (KIANLMAVPENVTDPLVSLEVYGR) the chain is on the periplasmic side. Residues 461 to 481 (VFMQIGIATAVIAVLMLLTAP) form a helical membrane-spanning segment. Residues 482 to 502 (KLNRMTLEDDKAAKATDTATA) lie on the Cytoplasmic side of the membrane.

It belongs to the major facilitator superfamily. Proton-dependent oligopeptide transporter (POT/PTR) (TC 2.A.17) family. DtpA subfamily.

Its subcellular location is the cell inner membrane. Its function is as follows. Proton-dependent permease that transports di- and tripeptides. This Enterobacter sp. (strain 638) protein is Dipeptide and tripeptide permease A.